A 297-amino-acid chain; its full sequence is N-acetylmuramic acid 6-phosphate etherase (297 aa).

An SIS domain is found at 55-218; that stretch reads ATDALKSGGR…STGAMVKFGK (164 aa). Glu-83 serves as the catalytic Proton donor. Residue Glu-114 is part of the active site.

The protein belongs to the GCKR-like family. MurNAc-6-P etherase subfamily. In terms of assembly, homodimer.

It carries out the reaction N-acetyl-D-muramate 6-phosphate + H2O = N-acetyl-D-glucosamine 6-phosphate + (R)-lactate. It participates in amino-sugar metabolism; 1,6-anhydro-N-acetylmuramate degradation. The protein operates within amino-sugar metabolism; N-acetylmuramate degradation. Its pathway is cell wall biogenesis; peptidoglycan recycling. In terms of biological role, specifically catalyzes the cleavage of the D-lactyl ether substituent of MurNAc 6-phosphate, producing GlcNAc 6-phosphate and D-lactate. Together with AnmK, is also required for the utilization of anhydro-N-acetylmuramic acid (anhMurNAc) either imported from the medium or derived from its own cell wall murein, and thus plays a role in cell wall recycling. The sequence is that of N-acetylmuramic acid 6-phosphate etherase from Enterobacter sp. (strain 638).